Here is a 294-residue protein sequence, read N- to C-terminus: Protoheme IX farnesyltransferase (294 aa).

Helical transmembrane passes span 8 to 28 (LTKPGIVLGNLMSSAGGFLIA), 35 to 55 (YSLFITMIVGTALVIASGCVL), 81 to 101 (IFLNQSIFYAVILSIFGFLFL), 107 to 127 (VLTIYLSAIGLFIYVGVYSLW), 133 to 153 (IYSIMVGSISGAMPPVIGYCA), 163 to 183 (LMLLIIFSLWQIPHSHSIAIL), 209 to 226 (MVVYIIGFIIATILFTVM), 230 to 252 (SYIFLIIISIMNLWWLHMGFYGY), and 266 to 286 (FLLSLIIIISLNLLLSLDHIL).

The protein belongs to the UbiA prenyltransferase family. Protoheme IX farnesyltransferase subfamily.

It is found in the cell inner membrane. The catalysed reaction is heme b + (2E,6E)-farnesyl diphosphate + H2O = Fe(II)-heme o + diphosphate. The protein operates within porphyrin-containing compound metabolism; heme O biosynthesis; heme O from protoheme: step 1/1. In terms of biological role, converts heme B (protoheme IX) to heme O by substitution of the vinyl group on carbon 2 of heme B porphyrin ring with a hydroxyethyl farnesyl side group. This is Protoheme IX farnesyltransferase from Blochmanniella pennsylvanica (strain BPEN).